Here is a 65-residue protein sequence, read N- to C-terminus: Trypsin inhibitor 1 (65 aa).

3 disulfide bridges follow: C39–C56, C46–C58, and C52–C64.

This sequence belongs to the protease inhibitor I7 (squash-type serine protease inhibitor) family.

The protein resides in the secreted. Functionally, inhibits trypsin. The sequence is that of Trypsin inhibitor 1 from Trichosanthes kirilowii (Chinese snake gourd).